Consider the following 146-residue polypeptide: Large ribosomal subunit protein uL11 (146 aa).

It belongs to the universal ribosomal protein uL11 family. Part of the ribosomal stalk of the 50S ribosomal subunit. Interacts with L10 and the large rRNA to form the base of the stalk. L10 forms an elongated spine to which L12 dimers bind in a sequential fashion forming a multimeric L10(L12)X complex. In terms of processing, one or more lysine residues are methylated.

Functionally, forms part of the ribosomal stalk which helps the ribosome interact with GTP-bound translation factors. This chain is Large ribosomal subunit protein uL11, found in Treponema pallidum subsp. pallidum (strain SS14).